We begin with the raw amino-acid sequence, 208 residues long: ATP-dependent Clp protease proteolytic subunit 1 (208 aa).

Ser108 functions as the Nucleophile in the catalytic mechanism. His133 is an active-site residue.

It belongs to the peptidase S14 family. Fourteen ClpP subunits assemble into 2 heptameric rings which stack back to back to give a disk-like structure with a central cavity, resembling the structure of eukaryotic proteasomes.

It is found in the cytoplasm. It carries out the reaction Hydrolysis of proteins to small peptides in the presence of ATP and magnesium. alpha-casein is the usual test substrate. In the absence of ATP, only oligopeptides shorter than five residues are hydrolyzed (such as succinyl-Leu-Tyr-|-NHMec, and Leu-Tyr-Leu-|-Tyr-Trp, in which cleavage of the -Tyr-|-Leu- and -Tyr-|-Trp bonds also occurs).. Functionally, cleaves peptides in various proteins in a process that requires ATP hydrolysis. Has a chymotrypsin-like activity. Plays a major role in the degradation of misfolded proteins. In Corynebacterium efficiens (strain DSM 44549 / YS-314 / AJ 12310 / JCM 11189 / NBRC 100395), this protein is ATP-dependent Clp protease proteolytic subunit 1.